The following is a 452-amino-acid chain: Solute carrier family 52, riboflavin transporter, member 3-B (452 aa).

5 consecutive transmembrane segments (helical) span residues 11–31 (LFGIGSWVAINGMWVELPLIV), 38–58 (WLLPSYLTIIIQMANIGPLFI), 73–93 (PVIYTIVAVGVVATFLLAFLW), 111–131 (LSFLLSVVDCTSSVTFLPFMM), and 138–158 (LTTYFIGEGLSGLVPALVALV). 4 N-linked (GlcNAc...) asparagine glycosylation sites follow: N168, N174, N179, and N193. 6 consecutive transmembrane segments (helical) span residues 199–219 (FFLFLSAMMMVCLGAFLLLNL), 285–305 (VFIFVVLAWVNALTNAVLPSV), 321–341 (AATLSSVANPVACFIAMFVPI), 344–364 (LVLMGVLTVTGTGFGAYIMAM), 381–401 (ALIVITWVIFVLSLSYVKVII), and 412–432 (ALVWCGAVVQLGSMLGALSMF).

Belongs to the riboflavin transporter family.

It localises to the cell membrane. The catalysed reaction is riboflavin(in) = riboflavin(out). Plasma membrane transporter mediating the uptake by cells of the water soluble vitamin B2/riboflavin that plays a key role in biochemical oxidation-reduction reactions of the carbohydrate, lipid, and amino acid metabolism. The polypeptide is Solute carrier family 52, riboflavin transporter, member 3-B (slc52a3b) (Danio rerio (Zebrafish)).